Here is a 355-residue protein sequence, read N- to C-terminus: Probable butyrate kinase (355 aa).

The protein belongs to the acetokinase family.

The protein localises to the cytoplasm. The catalysed reaction is butanoate + ATP = butanoyl phosphate + ADP. The protein is Probable butyrate kinase of Listeria monocytogenes serotype 4a (strain HCC23).